Here is a 159-residue protein sequence, read N- to C-terminus: Phosphopantetheine adenylyltransferase (159 aa).

This sequence belongs to the eukaryotic CoaD family.

Its subcellular location is the cytoplasm. The catalysed reaction is (R)-4'-phosphopantetheine + ATP + H(+) = 3'-dephospho-CoA + diphosphate. It participates in cofactor biosynthesis; coenzyme A biosynthesis. Functionally, reversibly transfers an adenylyl group from ATP to 4'-phosphopantetheine, yielding dephospho-CoA (dPCoA) and pyrophosphate. The protein is Phosphopantetheine adenylyltransferase of Thermococcus gammatolerans (strain DSM 15229 / JCM 11827 / EJ3).